The following is a 179-amino-acid chain: ATP synthase subunit delta (179 aa).

This sequence belongs to the ATPase delta chain family. F-type ATPases have 2 components, F(1) - the catalytic core - and F(0) - the membrane proton channel. F(1) has five subunits: alpha(3), beta(3), gamma(1), delta(1), epsilon(1). F(0) has three main subunits: a(1), b(2) and c(10-14). The alpha and beta chains form an alternating ring which encloses part of the gamma chain. F(1) is attached to F(0) by a central stalk formed by the gamma and epsilon chains, while a peripheral stalk is formed by the delta and b chains.

It localises to the cell inner membrane. F(1)F(0) ATP synthase produces ATP from ADP in the presence of a proton or sodium gradient. F-type ATPases consist of two structural domains, F(1) containing the extramembraneous catalytic core and F(0) containing the membrane proton channel, linked together by a central stalk and a peripheral stalk. During catalysis, ATP synthesis in the catalytic domain of F(1) is coupled via a rotary mechanism of the central stalk subunits to proton translocation. In terms of biological role, this protein is part of the stalk that links CF(0) to CF(1). It either transmits conformational changes from CF(0) to CF(1) or is implicated in proton conduction. This Thermosipho melanesiensis (strain DSM 12029 / CIP 104789 / BI429) protein is ATP synthase subunit delta.